We begin with the raw amino-acid sequence, 576 residues long: MSGLIPQPFIDDLLNRTDLVELIDGYVPLKKRGNSHIACCPFHNEKTPSFNVVAKKQFYHCFGCGASGNAISFVMNYLNQGFTDAVETLRRAWVKCPRDGTGEKHKSSLNLYNLMSEVSQYYQKKLKYNGQVAIDYLRNRGLSGEIAKRYHLGYAPEGWHNLEKAFPNNQRELLSTGMLIKSDEGKIYDRYRNRIMFPIHDRNGRVIGFGGRVLDKDQKPKYLNSPETVLFQKSRELYGLHQVLSQQKNPDSIIVVEGYMDVIALAQHGIFNVVATLGTATSTFHIQLLAKHTKHLIFCFDGDAAGKQAAWRALESSLPHLNAGLDAGFIFLPNEHDPDSLVRNEGKNGFLELLQQATPLHRFFFDTLSKDINLSNPAGKTQLINAVKPYLQKMVEGSYKQLLIDDLSRLTHIESHRLTNLITDKSESKPEVQAAISRSPLRIAIALLLQNPEIYSIAIQQINPALLHEQEHHILLKLLQQLKDKPNANTATLIEFWRNSSYFELIVKLAAWDHQVPEQELTKEFIDVLLFLQKQNREILIRQYIEKSRKTGLTEAERLSLQNLLKERHGQAEIEK.

The CHC2-type zinc-finger motif lies at 40–64 (CPFHNEKTPSFNVVAKKQFYHCFGC). The 83-residue stretch at 251–333 (DSIIVVEGYM…GLDAGFIFLP (83 aa)) folds into the Toprim domain. The Mg(2+) site is built by Glu-257, Asp-301, and Asp-303.

It belongs to the DnaG primase family. Monomer. Interacts with DnaB. Requires Zn(2+) as cofactor. The cofactor is Mg(2+).

The catalysed reaction is ssDNA + n NTP = ssDNA/pppN(pN)n-1 hybrid + (n-1) diphosphate.. Its function is as follows. RNA polymerase that catalyzes the synthesis of short RNA molecules used as primers for DNA polymerase during DNA replication. This Legionella pneumophila protein is DNA primase.